The chain runs to 167 residues: Intermembrane phospholipid transport system binding protein MlaD (167 aa).

Topologically, residues 1-6 (MRQTIK) are cytoplasmic. A helical; Signal-anchor for type II membrane protein membrane pass occupies residues 7–27 (YEFWVGLFLLLGIGALVFLGL). At 28–167 (RVANVQGFAE…GNEKSESTEQ (140 aa)) the chain is on the periplasmic side. The MCE/MlaD stretch occupies residues 40-118 (SYTVTATFDN…GEQYIALTMG (79 aa)).

Belongs to the MlaD family. In terms of assembly, the complex is composed of two ATP-binding proteins (MlaF), two transmembrane proteins (MlaE), two cytoplasmic solute-binding proteins (MlaB) and six periplasmic solute-binding proteins (MlaD).

The protein localises to the cell inner membrane. Its function is as follows. Part of the ABC transporter complex MlaFEDB, which is involved in a phospholipid transport pathway that maintains lipid asymmetry in the outer membrane by retrograde trafficking of phospholipids from the outer membrane to the inner membrane. MlaD functions in substrate binding with strong affinity for phospholipids and modulates ATP hydrolytic activity of the complex. The polypeptide is Intermembrane phospholipid transport system binding protein MlaD (Haemophilus influenzae (strain ATCC 51907 / DSM 11121 / KW20 / Rd)).